The following is a 71-amino-acid chain: Large ribosomal subunit protein bL31 (71 aa).

Positions 16, 18, 38, and 41 each coordinate Zn(2+).

This sequence belongs to the bacterial ribosomal protein bL31 family. Type A subfamily. In terms of assembly, part of the 50S ribosomal subunit. Requires Zn(2+) as cofactor.

Binds the 23S rRNA. The chain is Large ribosomal subunit protein bL31 from Laribacter hongkongensis (strain HLHK9).